The primary structure comprises 255 residues: Taurine import ATP-binding protein TauB (255 aa).

An ABC transporter domain is found at 2 to 229 (LQISHLYADY…RFVAGESSRS (228 aa)). 34–41 (GPSGCGKT) serves as a coordination point for ATP.

Belongs to the ABC transporter superfamily. Taurine importer (TC 3.A.1.17.1) family. In terms of assembly, the complex is composed of two ATP-binding proteins (TauB), two transmembrane proteins (TauC) and a solute-binding protein (TauA).

It localises to the cell inner membrane. It catalyses the reaction taurine(out) + ATP + H2O = taurine(in) + ADP + phosphate + H(+). Its function is as follows. Part of the ABC transporter complex TauABC involved in taurine import. Responsible for energy coupling to the transport system. In Shigella boydii serotype 4 (strain Sb227), this protein is Taurine import ATP-binding protein TauB.